A 151-amino-acid polypeptide reads, in one-letter code: Deoxyuridine 5'-triphosphate nucleotidohydrolase (151 aa).

Substrate contacts are provided by residues 70 to 72 (RSG), N83, 87 to 89 (LID), and M97.

It belongs to the dUTPase family. Mg(2+) serves as cofactor.

The enzyme catalyses dUTP + H2O = dUMP + diphosphate + H(+). The protein operates within pyrimidine metabolism; dUMP biosynthesis; dUMP from dCTP (dUTP route): step 2/2. Functionally, this enzyme is involved in nucleotide metabolism: it produces dUMP, the immediate precursor of thymidine nucleotides and it decreases the intracellular concentration of dUTP so that uracil cannot be incorporated into DNA. The sequence is that of Deoxyuridine 5'-triphosphate nucleotidohydrolase from Pseudomonas fluorescens (strain SBW25).